Consider the following 312-residue polypeptide: Ribosomal RNA small subunit methyltransferase H (312 aa).

S-adenosyl-L-methionine contacts are provided by residues 33 to 35 (AGH), Asp53, Phe79, Asp100, and Gln107.

It belongs to the methyltransferase superfamily. RsmH family.

The protein localises to the cytoplasm. The catalysed reaction is cytidine(1402) in 16S rRNA + S-adenosyl-L-methionine = N(4)-methylcytidine(1402) in 16S rRNA + S-adenosyl-L-homocysteine + H(+). Its function is as follows. Specifically methylates the N4 position of cytidine in position 1402 (C1402) of 16S rRNA. In Clostridium acetobutylicum (strain ATCC 824 / DSM 792 / JCM 1419 / IAM 19013 / LMG 5710 / NBRC 13948 / NRRL B-527 / VKM B-1787 / 2291 / W), this protein is Ribosomal RNA small subunit methyltransferase H.